Reading from the N-terminus, the 467-residue chain is Cysteine--tRNA ligase (467 aa).

Residue C29 coordinates Zn(2+). The short motif at 31–41 (PTVYDDSHLGH) is the 'HIGH' region element. Residues 155–174 (KLSGRGEDLEQVSRIESSEE) form a disordered region. Positions 158–174 (GRGEDLEQVSRIESSEE) are enriched in basic and acidic residues. Residues C210, H239, and E243 each coordinate Zn(2+). Residues 271–275 (KMSKS) carry the 'KMSKS' region motif. An ATP-binding site is contributed by K274.

Belongs to the class-I aminoacyl-tRNA synthetase family. In terms of assembly, monomer. Zn(2+) serves as cofactor.

Its subcellular location is the cytoplasm. The catalysed reaction is tRNA(Cys) + L-cysteine + ATP = L-cysteinyl-tRNA(Cys) + AMP + diphosphate. This Wolinella succinogenes (strain ATCC 29543 / DSM 1740 / CCUG 13145 / JCM 31913 / LMG 7466 / NCTC 11488 / FDC 602W) (Vibrio succinogenes) protein is Cysteine--tRNA ligase.